The following is a 166-amino-acid chain: Urease accessory protein UreE (166 aa).

Belongs to the UreE family.

The protein resides in the cytoplasm. Involved in urease metallocenter assembly. Binds nickel. Probably functions as a nickel donor during metallocenter assembly. In Pseudomonas savastanoi pv. phaseolicola (strain 1448A / Race 6) (Pseudomonas syringae pv. phaseolicola (strain 1448A / Race 6)), this protein is Urease accessory protein UreE.